Consider the following 241-residue polypeptide: Small ribosomal subunit protein uS2 (241 aa).

It belongs to the universal ribosomal protein uS2 family.

In Erwinia tasmaniensis (strain DSM 17950 / CFBP 7177 / CIP 109463 / NCPPB 4357 / Et1/99), this protein is Small ribosomal subunit protein uS2.